Consider the following 305-residue polypeptide: Ribonuclease BN (305 aa).

H64, H66, D68, H69, H141, D212, and H270 together coordinate Zn(2+). D68 (proton acceptor) is an active-site residue.

It belongs to the RNase Z family. RNase BN subfamily. In terms of assembly, homodimer. Zn(2+) is required as a cofactor.

Zinc phosphodiesterase, which has both exoribonuclease and endoribonuclease activities. The polypeptide is Ribonuclease BN (Escherichia coli O6:K15:H31 (strain 536 / UPEC)).